The chain runs to 136 residues: Translation initiation factor 5A (136 aa).

Hypusine is present on lysine 38.

It belongs to the eIF-5A family.

It is found in the cytoplasm. In terms of biological role, functions by promoting the formation of the first peptide bond. The sequence is that of Translation initiation factor 5A from Methanopyrus kandleri (strain AV19 / DSM 6324 / JCM 9639 / NBRC 100938).